A 287-amino-acid polypeptide reads, in one-letter code: ATP synthase gamma chain (287 aa).

This sequence belongs to the ATPase gamma chain family. In terms of assembly, F-type ATPases have 2 components, CF(1) - the catalytic core - and CF(0) - the membrane proton channel. CF(1) has five subunits: alpha(3), beta(3), gamma(1), delta(1), epsilon(1). CF(0) has three main subunits: a, b and c.

It localises to the cell inner membrane. Produces ATP from ADP in the presence of a proton gradient across the membrane. The gamma chain is believed to be important in regulating ATPase activity and the flow of protons through the CF(0) complex. This Geobacter metallireducens (strain ATCC 53774 / DSM 7210 / GS-15) protein is ATP synthase gamma chain.